The sequence spans 663 residues: Ankyrin repeat and SAM domain-containing protein 3 (663 aa).

Residues 1 to 421 (MSELSDEASE…PGSEPQAEKS (421 aa)) form an interaction with NEK7 region. Residues Ser-2 and Ser-5 each carry the phosphoserine modification. ANK repeat units follow at residues 34 to 64 (DVPL…DLNK), 68 to 97 (GGWT…SVNV), 101 to 130 (EGQT…ELEM), 134 to 163 (QGWT…NANV), 168 to 197 (YGFT…KVDT), and 201 to 220 (SGAT…IVAL). Asn-96 carries the 3-hydroxyasparagine modification. Phosphoserine occurs at positions 201, 225, 243, 244, and 245. Disordered regions lie at residues 242–261 (LSSS…CRKK) and 278–425 (TGLG…PYSG). Thr-318 is subject to Phosphothreonine. Residue Ser-319 is modified to Phosphoserine. The segment covering 322 to 337 (NERDVESSSSSSREEP) has biased composition (basic and acidic residues). Phosphoserine occurs at positions 366, 369, and 373. Residues 378–395 (KSSVRKQTRTYLKNKSRH) show a composition bias toward basic residues. An SAM domain is found at 424-487 (SGPQDLATLL…TSAIARWHSS (64 aa)). The stretch at 500–575 (ADRLEAEMQE…AALVLDQLRA (76 aa)) forms a coiled coil. Ser-540 bears the Phosphoserine mark. Disordered regions lie at residues 585–604 (KQHH…PADS) and 637–663 (AEPG…SDVG). Positions 641-651 (ETTDAEWEEME) are enriched in acidic residues. A compositionally biased stretch (basic and acidic residues) spans 654 to 663 (IARRDDSDVG).

Homooligomer. Interacts (via SAM domain) with ANKS6 (via SAM domain). Interacts with BICC1. Interacts with NPHP1. Interacts with NEK8. Interacts with HIF1AN. Interacts with NEK7; this interaction alters the subcellular distribution of NEK7 by preventing its nuclear translocation. Hydroxylated at Asn-96, most probably by HIF1AN. In terms of processing, phosphorylations at Ser-5, Ser-225, Thr-318, Ser-319, Ser-366 and Ser-369 occur in a NEK7-dependent manner. Post-translationally, polyubiquitinated.

The protein localises to the cell projection. It is found in the cilium. The protein resides in the cytoplasm. Its function is as follows. May be involved in vasopressin signaling in the kidney. The sequence is that of Ankyrin repeat and SAM domain-containing protein 3 (Anks3) from Rattus norvegicus (Rat).